The chain runs to 724 residues: NAD(+) hydrolase SARM1 (724 aa).

The N-terminal 27 residues, methionine 1–arginine 27, are a transit peptide targeting the mitochondrion. The ARM 1 repeat unit spans residues glutamate 60–glutamate 100. Residues tryptophan 103, arginine 110, glutamate 149–arginine 157, and histidine 190–lysine 193 contribute to the NAD(+) site. 7 ARM repeats span residues glutamine 114–valine 153, glutamate 155–lysine 193, glutamate 196–leucine 235, glycine 237–asparagine 280, lysine 281–aspartate 314, alanine 315–alanine 354, and glutamine 359–proline 402. 2 consecutive SAM domains span residues tryptophan 412 to phenylalanine 476 and asparagine 486 to serine 548. A phosphoserine mark is found at serine 548 and serine 558. A TIR domain is found at aspartate 560 to serine 703. NAD(+) contacts are provided by residues arginine 569–arginine 570 and glutamate 599. Residue glutamate 642 is part of the active site. A disordered region spans residues serine 704–threonine 724.

It belongs to the SARM1 family. In terms of assembly, homooctamer; forms an octameric ring via SAM domains. Interacts with TICAM1/TRIF and thereby interferes with TICAM1/TRIF function. Interacts with MAPK10/JNK3 and SDC2 (via cytoplasmic domain). In terms of processing, phosphorylation at Ser-548 by JNK kinases (MAPK8, MAPK9 and /or MAPK10) enhance the NAD(+) hydrolase (NADase) activity. Phosphorylation at Ser-548 and subsequent activation takes place in response to oxidative stress conditions and inhibits mitochondrial respiration. As to expression, predominantly expressed in brain, kidney and liver. Expressed at lower level in placenta.

It is found in the cytoplasm. The protein resides in the cell projection. Its subcellular location is the axon. It localises to the dendrite. The protein localises to the synapse. It is found in the mitochondrion. It carries out the reaction NAD(+) + H2O = ADP-D-ribose + nicotinamide + H(+). The catalysed reaction is NAD(+) = cyclic ADP-beta-D-ribose + nicotinamide + H(+). It catalyses the reaction NADP(+) + H2O = ADP-D-ribose 2'-phosphate + nicotinamide + H(+). Autoinhibited: in the inactive state, the enzymatic TIR domain is held apart by the autoinhibiting ARM repeats. NAD(+)-binding to ARM repeats maintains an inactive state by promoting interaction between ARM repeats and the TIR domain, thereby facilitating inhibition of the enzymatic TIR domain. Following activation, possibly by nicotinamide mononucleotide (NMN), auto-inhibitory interactions are released, allowing self-association of the TIR domains and subsequent activation of the NAD(+) hydrolase (NADase) activity. Self-association of TIR domains is facilitated by the octamer of SAM domains. NAD(+) hydrolase activity is inhibited by nicotinamide. Specifically inhibited by berberine chloride and zinc chloride. In terms of biological role, NAD(+) hydrolase, which plays a key role in axonal degeneration following injury by regulating NAD(+) metabolism. Acts as a negative regulator of MYD88- and TRIF-dependent toll-like receptor signaling pathway by promoting Wallerian degeneration, an injury-induced form of programmed subcellular death which involves degeneration of an axon distal to the injury site. Wallerian degeneration is triggered by NAD(+) depletion: in response to injury, SARM1 is activated and catalyzes cleavage of NAD(+) into ADP-D-ribose (ADPR), cyclic ADPR (cADPR) and nicotinamide; NAD(+) cleavage promoting cytoskeletal degradation and axon destruction. Also able to hydrolyze NADP(+), but not other NAD(+)-related molecules. Can activate neuronal cell death in response to stress. Regulates dendritic arborization through the MAPK4-JNK pathway. Involved in innate immune response: inhibits both TICAM1/TRIF- and MYD88-dependent activation of JUN/AP-1, TRIF-dependent activation of NF-kappa-B and IRF3, and the phosphorylation of MAPK14/p38. The chain is NAD(+) hydrolase SARM1 from Homo sapiens (Human).